The following is a 625-amino-acid chain: Endoglucanase D (625 aa).

Residues 1–17 (SLTGVFPSGLIETKVSA) form the signal peptide. The active-site Nucleophile is the D177. Residues H492 and D522 contribute to the active site. E531 serves as the catalytic Proton donor. The region spanning 555-625 (NEVLYGDVND…LIRVIEKLPI (71 aa)) is the Dockerin domain.

This sequence belongs to the glycosyl hydrolase 9 (cellulase E) family. The cofactor is Ca(2+).

It catalyses the reaction Endohydrolysis of (1-&gt;4)-beta-D-glucosidic linkages in cellulose, lichenin and cereal beta-D-glucans.. Its function is as follows. This enzyme catalyzes the endohydrolysis of 1,4-beta-glucosidic linkages in cellulose, lichenin and cereal beta-D-glucans. In Acetivibrio thermocellus (Hungateiclostridium thermocellum), this protein is Endoglucanase D (celD).